The following is a 463-amino-acid chain: MGKVPSSFRSMPANLLVRKTTPSPPAPPRDFRNRTAVGGDSAKLPQNTQAPREPSLRNPFKSPNLSDAKSLFNSIAATSRIPLDLKFHNSVLQSYGSIAVVNDTVKLFQHILKSQPNFRPGRSTFLILLSHACRAPDSSISNVHRVLNLMVNNGLEPDQVTTDIAVRSLCETGRVDEAKDLMKELTEKHSPPDTYTYNFLLKHLCKCKDLHVVYEFVDEMRDDFDVKPDLVSFTILIDNVCNSKNLREAMYLVSKLGNAGFKPDCFLYNTIMKGFCTLSKGSEAVGVYKKMKEEGVEPDQITYNTLIFGLSKAGRVEEARMYLKTMVDAGYEPDTATYTSLMNGMCRKGESLGALSLLEEMEARGCAPNDCTYNTLLHGLCKARLMDKGMELYEMMKSSGVKLESNGYATLVRSLVKSGKVAEAYEVFDYAVDSKSLSDASAYSTLETTLKWLKKAKEQGLVP.

Positions 1 to 63 are disordered; it reads MGKVPSSFRS…PSLRNPFKSP (63 aa). 9 PPR repeats span residues 121 to 157, 158 to 192, 193 to 223, 229 to 263, 264 to 298, 299 to 333, 334 to 368, 369 to 403, and 404 to 438; these read GRSTFLILLSHACRAPDSSISNVHRVLNLMVNNGLEP, DQVTTDIAVRSLCETGRVDEAKDLMKELTEKHSPP, DTYTYNFLLKHLCKCKDLHVVYEFVDEMRDD, DLVSFTILIDNVCNSKNLREAMYLVSKLGNAGFKP, DCFLYNTIMKGFCTLSKGSEAVGVYKKMKEEGVEP, DQITYNTLIFGLSKAGRVEEARMYLKTMVDAGYEP, DTATYTSLMNGMCRKGESLGALSLLEEMEARGCAP, NDCTYNTLLHGLCKARLMDKGMELYEMMKSSGVKL, and ESNGYATLVRSLVKSGKVAEAYEVFDYAVDSKSLS.

This sequence belongs to the PPR family. P subfamily.

This chain is Pentatricopeptide repeat-containing protein At2g17670, found in Arabidopsis thaliana (Mouse-ear cress).